The following is a 538-amino-acid chain: Putative outer membrane porin BglH (538 aa).

The signal sequence occupies residues 1 to 25 (MFRRNLITSAILLMAPLAFSAQSLA). Residues 52-82 (KDEEKKKYTPATVNRSVSTNDQGYAANPFPT) form a disordered region. The span at 62–73 (ATVNRSVSTNDQ) shows a compositional bias: polar residues.

Belongs to the porin LamB (TC 1.B.3) family.

The protein resides in the cell outer membrane. Its function is as follows. May be a sugar porin with a broad carbohydrate specificity. This Shigella flexneri serotype 5b (strain 8401) protein is Putative outer membrane porin BglH (bglH).